Here is a 361-residue protein sequence, read N- to C-terminus: Probable cadicidin biosynthesis thioesterase (361 aa).

Residues 2 to 29 form the 4Fe-4S ferredoxin-type domain; sequence RVTVDSEQCVGAGQCVLNAPEVFDQDDD. Positions 36 to 110 are disordered; sequence RADPTSGTTR…RRDSPVTTAD (75 aa). Residues 46 to 61 are compositionally biased toward basic residues; that stretch reads RSARRATCARRPRSSS. 2 stretches are compositionally biased toward basic and acidic residues: residues 62–74 and 94–104; these read RRTEPAGCADRHR and TDRRQNHRRDS. The active site involves Ser201.

Belongs to the thioesterase family.

It participates in antibiotic biosynthesis; candicidin biosynthesis. In terms of biological role, probable thioesterase involved in the biosynthesis of candicidin. Could release the macrolide ring from the polyketide synthase. The protein is Probable cadicidin biosynthesis thioesterase of Streptomyces griseus.